The primary structure comprises 291 residues: Nucleoid occlusion protein (291 aa).

Residues 155–174 (EALAQRLGKGQSTVANKLRL) constitute a DNA-binding region (H-T-H motif).

The protein belongs to the ParB family.

The protein resides in the cytoplasm. Its subcellular location is the nucleoid. In terms of biological role, effects nucleoid occlusion by binding relatively nonspecifically to DNA and preventing the assembly of the division machinery in the vicinity of the nucleoid, especially under conditions that disturb the cell cycle. It helps to coordinate cell division and chromosome segregation by preventing the formation of the Z ring through the nucleoid, which would cause chromosome breakage. The protein is Nucleoid occlusion protein of Bacillus pumilus (strain SAFR-032).